Reading from the N-terminus, the 161-residue chain is Capsid protein (161 aa).

It belongs to the virgaviridae capsid protein family.

Its subcellular location is the virion. Functionally, capsid protein self-assembles to form rod-shaped virions about 18 nm in diameter with a central canal enclosing the viral genomic RNA. The protein is Capsid protein (CP) of Tobamovirus Ob.